The chain runs to 822 residues: Putative pentatricopeptide repeat-containing protein At5g13230, mitochondrial (822 aa).

The N-terminal 70 residues, 1 to 70, are a transit peptide targeting the mitochondrion; that stretch reads MIVFMRIIHV…QKNDPISAKA (70 aa). PPR repeat units follow at residues 48–82, 83–117, 145–179, 180–210, 211–245, 246–280, 281–311, 312–346, 347–381, 382–416, 417–447, 448–482, 483–513, 514–548, 549–584, and 585–619; these read DSHA…GSCL, DLFA…NNVS, NPHV…GYDS, NAFV…ILCK, DIVV…GFMP, NNYT…CYVL, DPRV…MPKN, DVVP…FVVP, NEFT…GFDL, DIYV…NEVS, WNTV…QVSV, TEVT…NNAK, KVAV…METI, DVAS…DCKP, NGLT…GIEP, and CLEH…PSVM. The tract at residues 620-695 is type E motif; it reads IWRAMLSASM…EPGLSWIEHQ (76 aa). Residues 696-726 are type E(+) motif; it reads GDVHYFSVGLSDHPDMKLINGMLEWLNMKAT. Residues 727-822 are type DYW motif; the sequence is RAGYVPDRNA…AGVCSCGDHW (96 aa).

The protein belongs to the PPR family. PCMP-H subfamily.

The protein localises to the mitochondrion. The sequence is that of Putative pentatricopeptide repeat-containing protein At5g13230, mitochondrial (PCMP-H89) from Arabidopsis thaliana (Mouse-ear cress).